Reading from the N-terminus, the 244-residue chain is Transcriptional activator protein PhzR (244 aa).

The HTH luxR-type domain maps to 177–242; the sequence is AFNTDVEFSE…QAVSYAVALG (66 aa). The segment at residues 201 to 220 is a DNA-binding region (H-T-H motif); the sequence is SEEIGVIMGVCTDTVNYHHR.

The protein belongs to the autoinducer-regulated transcriptional regulatory protein family.

Positive regulator of phenazine antibiotic production. May activate the phenazine biosynthetic genes by binding to a DNA sequence upstream of them, or to an intermediate gene which, in turn, interacts with them. In Pseudomonas fluorescens, this protein is Transcriptional activator protein PhzR (phzR).